The chain runs to 141 residues: Large ribosomal subunit protein uL11 (141 aa).

It belongs to the universal ribosomal protein uL11 family. In terms of assembly, part of the ribosomal stalk of the 50S ribosomal subunit. Interacts with L10 and the large rRNA to form the base of the stalk. L10 forms an elongated spine to which L12 dimers bind in a sequential fashion forming a multimeric L10(L12)X complex. Post-translationally, one or more lysine residues are methylated.

Forms part of the ribosomal stalk which helps the ribosome interact with GTP-bound translation factors. This chain is Large ribosomal subunit protein uL11, found in Syntrophus aciditrophicus (strain SB).